The primary structure comprises 214 residues: Large ribosomal subunit protein uL3 (214 aa).

The interval 134–161 (THGNSLSHRAPGSIGQCQTPGRVMKGKK) is disordered. Q151 carries the N5-methylglutamine modification.

Belongs to the universal ribosomal protein uL3 family. Part of the 50S ribosomal subunit. Forms a cluster with proteins L14 and L19. Post-translationally, methylated by PrmB.

One of the primary rRNA binding proteins, it binds directly near the 3'-end of the 23S rRNA, where it nucleates assembly of the 50S subunit. The chain is Large ribosomal subunit protein uL3 from Teredinibacter turnerae (strain ATCC 39867 / T7901).